Reading from the N-terminus, the 172-residue chain is Putative phosphoesterase BcerKBAB4_1135 (172 aa).

His-34 acts as the Proton donor in catalysis. Short sequence motifs (HXTX) lie at residues 34–37 and 115–118; these read HITL and HLTI. His-115 serves as the catalytic Proton acceptor.

The protein belongs to the 2H phosphoesterase superfamily. YjcG family.

The protein is Putative phosphoesterase BcerKBAB4_1135 of Bacillus mycoides (strain KBAB4) (Bacillus weihenstephanensis).